The following is a 703-amino-acid chain: Glycogen [starch] synthase, liver (703 aa).

Ser8 carries the post-translational modification Phosphoserine; by PKA. Phosphoserine is present on Ser11. Lys40 is a UDP binding site. The UDP-alpha-D-glucose site is built by His205 and Arg211. 5 residues coordinate alpha-D-glucose 6-phosphate: His291, Glu292, Gln294, His297, and Lys301. Arg331 is a UDP binding site. Residue Arg331 coordinates UDP-alpha-D-glucose. His501 is a binding site for alpha-D-glucose 6-phosphate. The UDP-alpha-D-glucose site is built by Glu510, Trp512, and Gly513. Thr515 serves as a coordination point for UDP. Alpha-D-glucose 6-phosphate is bound by residues Arg582 and Arg586. The residue at position 627 (Ser627) is a Phosphoserine. A disordered region spans residues 628–703 (PPTTEGFKYP…KKKLHGEYKN (76 aa)). Residues Ser641, Ser645, Ser649, and Ser653 each carry the phosphoserine; by GSK3-alpha and GSK3-beta modification. Residues 647-657 (SGSQASSPQSS) show a composition bias toward low complexity. Ser657 is modified (phosphoserine; by CK2). Acidic residues predominate over residues 658 to 674 (DVEDEVEDERYDEEEEA). Ser683 carries the phosphoserine modification.

The protein belongs to the glycosyltransferase 3 family. Part of the glycogen synthase (GS)-glycogenin complex, a heterooctamer composed of a tetramer of GS and 2 dimers of glycogenin, where each GS protomer binds to one glycogenin subunit (via glycogenin C-terminus); the GS tetramer may dissociate from glycogenin dimers to continue glycogen polymerization on its own. May also form a heterooctamer complex with GYG1 (via GYG1 C-terminus). In terms of processing, primed phosphorylation at Ser-657 (site 5) by CSNK2A1 and CSNK2A2 is required for inhibitory phosphorylation at Ser-641 (site 3a), Ser-645 (site 3b), Ser-649 (site 3c) and Ser-653 (site 4) by GSK3A an GSK3B. Dephosphorylation at Ser-641 and Ser-645 by PP1 activates the enzyme. Phosphorylation at Ser-8 is not required for interaction with GYG1. Interaction with GYG1 does not regulate the phosphorylation at Ser-8 and Ser-641. In terms of tissue distribution, specifically expressed in liver (at protein level).

It carries out the reaction [(1-&gt;4)-alpha-D-glucosyl](n) + UDP-alpha-D-glucose = [(1-&gt;4)-alpha-D-glucosyl](n+1) + UDP + H(+). Its pathway is glycan biosynthesis; glycogen biosynthesis. Its activity is regulated as follows. Allosteric activation by glucose-6-phosphate. Phosphorylation reduces the activity towards UDP-glucose. When in the non-phosphorylated state, glycogen synthase does not require glucose-6-phosphate as an allosteric activator; when phosphorylated it does. Glycogen synthase participates in the glycogen biosynthetic process along with glycogenin and glycogen branching enzyme. Extends the primer composed of a few glucose units formed by glycogenin by adding new glucose units to it. In this context, glycogen synthase transfers the glycosyl residue from UDP-Glc to the non-reducing end of alpha-1,4-glucan. The protein is Glycogen [starch] synthase, liver of Homo sapiens (Human).